The following is a 167-amino-acid chain: Lipoprotein signal peptidase (167 aa).

2 helical membrane-spanning segments follow: residues 56–76 (FAPP…VLVF) and 84–104 (TPIF…NMID). Active-site residues include D113 and D139. The chain crosses the membrane as a helical span at residues 132–152 (WPIFNVADSAITIGACMLVLF).

Belongs to the peptidase A8 family.

It is found in the cell inner membrane. The catalysed reaction is Release of signal peptides from bacterial membrane prolipoproteins. Hydrolyzes -Xaa-Yaa-Zaa-|-(S,diacylglyceryl)Cys-, in which Xaa is hydrophobic (preferably Leu), and Yaa (Ala or Ser) and Zaa (Gly or Ala) have small, neutral side chains.. It functions in the pathway protein modification; lipoprotein biosynthesis (signal peptide cleavage). In terms of biological role, this protein specifically catalyzes the removal of signal peptides from prolipoproteins. This Chlorobium luteolum (strain DSM 273 / BCRC 81028 / 2530) (Pelodictyon luteolum) protein is Lipoprotein signal peptidase.